A 165-amino-acid polypeptide reads, in one-letter code: PTS system glucose-specific EIIA component (165 aa).

The region spanning Asp-33–Asn-137 is the PTS EIIA type-1 domain. Residues His-70 and His-85 each coordinate Zn(2+). His-85 functions as the Tele-phosphohistidine intermediate; for EIIA activity in the catalytic mechanism. His-85 bears the Phosphohistidine; by HPr mark.

Heterodimer with glycerol kinase (glpk). The cofactor is Zn(2+).

Its subcellular location is the cytoplasm. Functionally, the phosphoenolpyruvate-dependent sugar phosphotransferase system (sugar PTS), a major carbohydrate active transport system, catalyzes the phosphorylation of incoming sugar substrates concomitantly with their translocation across the cell membrane. The enzyme II complex composed of PtsG and Crr is involved in glucose transport. The sequence is that of PTS system glucose-specific EIIA component (crr) from Bacillus cereus (strain ATCC 14579 / DSM 31 / CCUG 7414 / JCM 2152 / NBRC 15305 / NCIMB 9373 / NCTC 2599 / NRRL B-3711).